Here is a 320-residue protein sequence, read N- to C-terminus: Glycerol-3-phosphate dehydrogenase [NAD(P)+] (320 aa).

The NADPH site is built by Phe11, Arg30, and Lys102. Residues Lys102, Gly130, and Ser132 each coordinate sn-glycerol 3-phosphate. Residue Ala134 coordinates NADPH. 5 residues coordinate sn-glycerol 3-phosphate: Lys185, Asp238, Ser248, Arg249, and Asn250. The Proton acceptor role is filled by Lys185. Residue Arg249 coordinates NADPH. Glu270 lines the NADPH pocket.

It belongs to the NAD-dependent glycerol-3-phosphate dehydrogenase family.

It is found in the cytoplasm. The catalysed reaction is sn-glycerol 3-phosphate + NAD(+) = dihydroxyacetone phosphate + NADH + H(+). It carries out the reaction sn-glycerol 3-phosphate + NADP(+) = dihydroxyacetone phosphate + NADPH + H(+). Its pathway is membrane lipid metabolism; glycerophospholipid metabolism. Its function is as follows. Catalyzes the reduction of the glycolytic intermediate dihydroxyacetone phosphate (DHAP) to sn-glycerol 3-phosphate (G3P), the key precursor for phospholipid synthesis. The sequence is that of Glycerol-3-phosphate dehydrogenase [NAD(P)+] from Roseobacter denitrificans (strain ATCC 33942 / OCh 114) (Erythrobacter sp. (strain OCh 114)).